The chain runs to 119 residues: Large ribosomal subunit protein bL19 (119 aa).

The protein belongs to the bacterial ribosomal protein bL19 family.

Functionally, this protein is located at the 30S-50S ribosomal subunit interface and may play a role in the structure and function of the aminoacyl-tRNA binding site. The sequence is that of Large ribosomal subunit protein bL19 (rplS) from Mycoplasma genitalium (strain ATCC 33530 / DSM 19775 / NCTC 10195 / G37) (Mycoplasmoides genitalium).